A 297-amino-acid polypeptide reads, in one-letter code: MRIILITGISGSGKSVALNALEDAGYYCVDNLPPRFLPELATYLAGDGKDRLAVAIDARSGASLDDMPQMIRDLSGQHDVRVLFLNASTQALIQRFSETRRRHPLSGSPAHDADVGLLTSLAEAIERERELVAGLAEFGHQIDTSNLRANVLRMWVKRFIEQEHTGLALMFESFGFKRGVPLDADFVFDVRTLPNPYYDRELRPLTGLDRPVIDFLEALPVVQQMMGDIESFLQKWLPGFRDDNRSYLTVAIGCTGGQHRSVFIAETLAARFASEGNVIVRHRDAPIDVDDSSKLVA.

8 to 15 contributes to the ATP binding site; the sequence is GISGSGKS. 57 to 60 contributes to the GTP binding site; sequence DARS.

This sequence belongs to the RapZ-like family.

Displays ATPase and GTPase activities. This is Nucleotide-binding protein Bphy_0322 from Paraburkholderia phymatum (strain DSM 17167 / CIP 108236 / LMG 21445 / STM815) (Burkholderia phymatum).